The primary structure comprises 512 residues: Plastidal glycolate/glycerate translocator 1, chloroplastic (512 aa).

A chloroplast-targeting transit peptide spans 1–76; it reads MATLLATPIF…MNFERKLSVQ (76 aa). Ala77 bears the N-acetylalanine mark. A run of 12 helical transmembrane segments spans residues 93-113, 127-147, 160-180, 195-215, 238-258, 270-290, 293-313, 336-356, 367-387, 398-418, 425-445, and 480-500; these read VIAI…DYFL, ALFG…VVPA, FLFI…VLPL, YIVA…AIAV, LELW…LFYP, PFLL…PSSI, VFHP…AFGY, AGDI…FSMF, AEIF…TALV, TVSI…VSLF, LTAA…QVVL, and LPFC…LCSV.

Belongs to the CidB/LrgB family. Expressed in leaves, stems and flowers, but not in roots.

Its subcellular location is the plastid. The protein localises to the chloroplast membrane. Its function is as follows. Glycolate/glycerate transporter required for photorespiration. The chain is Plastidal glycolate/glycerate translocator 1, chloroplastic (PLGG1) from Arabidopsis thaliana (Mouse-ear cress).